Reading from the N-terminus, the 291-residue chain is uncharacterized protein (291 aa).

Residues 191 to 289 (KQMLNWIHLH…NMTPLSYKKM (99 aa)) form the HTH araC/xylS-type domain. 2 DNA-binding regions (H-T-H motif) span residues 208–229 (EDIAKAGQLSRSECCRYFKRML) and 256–279 (VTEVSYQVGFNSTSYFISKFQQAM).

This is an uncharacterized protein from Bacillus subtilis (strain 168).